Consider the following 248-residue polypeptide: Octanoyltransferase (248 aa).

Residues 53–234 (ADTVDEIWIV…RLIANLDGES (182 aa)) enclose the BPL/LPL catalytic domain. Residues 93 to 100 (RGGQITYH), 165 to 167 (ALG), and 178 to 180 (GLS) each bind substrate. Catalysis depends on cysteine 196, which acts as the Acyl-thioester intermediate.

It belongs to the LipB family.

It localises to the cytoplasm. The enzyme catalyses octanoyl-[ACP] + L-lysyl-[protein] = N(6)-octanoyl-L-lysyl-[protein] + holo-[ACP] + H(+). Its pathway is protein modification; protein lipoylation via endogenous pathway; protein N(6)-(lipoyl)lysine from octanoyl-[acyl-carrier-protein]: step 1/2. Catalyzes the transfer of endogenously produced octanoic acid from octanoyl-acyl-carrier-protein onto the lipoyl domains of lipoate-dependent enzymes. Lipoyl-ACP can also act as a substrate although octanoyl-ACP is likely to be the physiological substrate. In Burkholderia multivorans (strain ATCC 17616 / 249), this protein is Octanoyltransferase.